The chain runs to 396 residues: Ribosomal RNA large subunit methyltransferase I (396 aa).

The region spanning 2 to 81 (SVRLVLAKGR…ETIDIAFFTR (80 aa)) is the PUA domain.

This sequence belongs to the methyltransferase superfamily. RlmI family.

The protein resides in the cytoplasm. The catalysed reaction is cytidine(1962) in 23S rRNA + S-adenosyl-L-methionine = 5-methylcytidine(1962) in 23S rRNA + S-adenosyl-L-homocysteine + H(+). In terms of biological role, specifically methylates the cytosine at position 1962 (m5C1962) of 23S rRNA. The protein is Ribosomal RNA large subunit methyltransferase I of Cronobacter sakazakii (strain ATCC BAA-894) (Enterobacter sakazakii).